Here is a 201-residue protein sequence, read N- to C-terminus: Recombination protein RecR (201 aa).

Residues 59 to 74 (CKICGNIDTENICRIC) form a C4-type zinc finger. The region spanning 82-177 (SIIAIVETVA…KISRLASGIP (96 aa)) is the Toprim domain.

The protein belongs to the RecR family.

Its function is as follows. May play a role in DNA repair. It seems to be involved in an RecBC-independent recombinational process of DNA repair. It may act with RecF and RecO. This is Recombination protein RecR from Rickettsia massiliae (strain Mtu5).